Here is a 206-residue protein sequence, read N- to C-terminus: 2,3-bisphosphoglycerate-dependent phosphoglycerate mutase (206 aa).

Residues 9–16 (RHGQSEWN), 22–23 (TG), R61, 88–91 (ERDY), K99, 115–116 (RR), and 159–160 (GN) contribute to the substrate site. The active-site Tele-phosphohistidine intermediate is the H10. E88 acts as the Proton donor/acceptor in catalysis.

Belongs to the phosphoglycerate mutase family. BPG-dependent PGAM subfamily. In terms of assembly, homodimer.

The catalysed reaction is (2R)-2-phosphoglycerate = (2R)-3-phosphoglycerate. It participates in carbohydrate degradation; glycolysis; pyruvate from D-glyceraldehyde 3-phosphate: step 3/5. Functionally, catalyzes the interconversion of 2-phosphoglycerate and 3-phosphoglycerate. In Methylocella silvestris (strain DSM 15510 / CIP 108128 / LMG 27833 / NCIMB 13906 / BL2), this protein is 2,3-bisphosphoglycerate-dependent phosphoglycerate mutase.